The primary structure comprises 419 residues: UDP-N-acetylglucosamine 1-carboxyvinyltransferase (419 aa).

Lysine 22 to asparagine 23 provides a ligand contact to phosphoenolpyruvate. A UDP-N-acetyl-alpha-D-glucosamine-binding site is contributed by arginine 91. Cysteine 115 functions as the Proton donor in the catalytic mechanism. Cysteine 115 is subject to 2-(S-cysteinyl)pyruvic acid O-phosphothioketal. UDP-N-acetyl-alpha-D-glucosamine-binding positions include arginine 120 to leucine 124, lysine 160 to valine 163, aspartate 305, and isoleucine 327.

The protein belongs to the EPSP synthase family. MurA subfamily.

Its subcellular location is the cytoplasm. The catalysed reaction is phosphoenolpyruvate + UDP-N-acetyl-alpha-D-glucosamine = UDP-N-acetyl-3-O-(1-carboxyvinyl)-alpha-D-glucosamine + phosphate. The protein operates within cell wall biogenesis; peptidoglycan biosynthesis. In terms of biological role, cell wall formation. Adds enolpyruvyl to UDP-N-acetylglucosamine. In Tolumonas auensis (strain DSM 9187 / NBRC 110442 / TA 4), this protein is UDP-N-acetylglucosamine 1-carboxyvinyltransferase.